The following is a 120-amino-acid chain: Large ribosomal subunit protein uL18 (120 aa).

Positions 1–22 (MKLTRRESKNRRHRRVRGKVVG) are disordered. Basic residues predominate over residues 8–18 (SKNRRHRRVRG).

Belongs to the universal ribosomal protein uL18 family. In terms of assembly, part of the 50S ribosomal subunit; part of the 5S rRNA/L5/L18/L25 subcomplex. Contacts the 5S and 23S rRNAs.

Functionally, this is one of the proteins that bind and probably mediate the attachment of the 5S RNA into the large ribosomal subunit, where it forms part of the central protuberance. This Nostoc punctiforme (strain ATCC 29133 / PCC 73102) protein is Large ribosomal subunit protein uL18.